Reading from the N-terminus, the 432-residue chain is Peptidase B (432 aa).

Mn(2+) contacts are provided by Lys-196 and Asp-201. Residue Lys-208 is part of the active site. Positions 219, 278, and 280 each coordinate Mn(2+). Arg-282 is an active-site residue.

Belongs to the peptidase M17 family. Homohexamer. Mn(2+) is required as a cofactor.

Its subcellular location is the cytoplasm. It catalyses the reaction Release of an N-terminal amino acid, Xaa, from a peptide or arylamide. Xaa is preferably Glu or Asp but may be other amino acids, including Leu, Met, His, Cys and Gln.. In terms of biological role, probably plays an important role in intracellular peptide degradation. The sequence is that of Peptidase B from Yersinia pestis bv. Antiqua (strain Antiqua).